Reading from the N-terminus, the 57-residue chain is COP9 signalosome complex subunit 9 (57 aa).

It belongs to the CSN9 family. Component of the CSN complex, probably composed of cops1, cops2, cops3, cops4, cops5, cops6, cops7, cops8 and cops9.

It localises to the nucleus. Its subcellular location is the cytoplasm. It is found in the nucleoplasm. Component of the COP9 signalosome complex (CSN), a complex involved in various cellular and developmental processes. The CSN complex is an essential regulator of the ubiquitin (Ubl) conjugation pathway by mediating the deneddylation of the cullin subunits of SCF-type E3 ligase complexes, leading to decrease the Ubl ligase activity. May play a role in cell proliferation. The chain is COP9 signalosome complex subunit 9 from Danio rerio (Zebrafish).